A 521-amino-acid chain; its full sequence is MARTSSLMVTSEAFPLAKSGGLGDAVTGLARALSRAGVDTGILMPAYRGVLDRVVGIRHIAHLAGMPGGEATLVGALCPESGLPFYLLCNPGLYDRDGLYLDEQGQPYADNAVRFAALAHAAMRVAAGLPGMRRPDILHAQDWHAGLVPLLVRAAGLRYVKTVLTVHNLAFQGSFELECAGQIGVPGAYCTDDGARLHGRINFMKAGLRYADRITTVSRNYAREIMTPEFGCGLDPLLRARAADLAPIPNGIDDALWNPASDPHLGHLCYSARNPARKSRAKAALQKAFGLHPDQGAALLAMGSRLTSQKMADVAVEALPDALHRHPSLQVAIIGRGERQYEIELEALAARYPGRCAVRIGYDETTAHRLHAGADMLLHGSRFEPFGLTPLYAMRYGAVPIASRVGGMADTIVDPGEREGSQAMLAATGILFDGDGAPDMGHAIDRALRLYAQPAIWRSMQRNGMACEFGWNTAAQPYLDLFENMVDAPRRGRVPAPTIRPAPLPAYARSSLDGMPAPAAY.

Lysine 18 provides a ligand contact to ADP-alpha-D-glucose.

Belongs to the glycosyltransferase 1 family. Bacterial/plant glycogen synthase subfamily.

The catalysed reaction is [(1-&gt;4)-alpha-D-glucosyl](n) + ADP-alpha-D-glucose = [(1-&gt;4)-alpha-D-glucosyl](n+1) + ADP + H(+). It functions in the pathway glycan biosynthesis; glycogen biosynthesis. Its function is as follows. Synthesizes alpha-1,4-glucan chains using ADP-glucose. The polypeptide is Glycogen synthase (Bordetella petrii (strain ATCC BAA-461 / DSM 12804 / CCUG 43448)).